The sequence spans 550 residues: Formate--tetrahydrofolate ligase (550 aa).

An ATP-binding site is contributed by 62-69; it reads TPAGEGKS.

This sequence belongs to the formate--tetrahydrofolate ligase family.

It carries out the reaction (6S)-5,6,7,8-tetrahydrofolate + formate + ATP = (6R)-10-formyltetrahydrofolate + ADP + phosphate. It functions in the pathway one-carbon metabolism; tetrahydrofolate interconversion. This chain is Formate--tetrahydrofolate ligase, found in Corynebacterium diphtheriae (strain ATCC 700971 / NCTC 13129 / Biotype gravis).